The chain runs to 360 residues: Alanine racemase (360 aa).

Catalysis depends on Lys-36, which acts as the Proton acceptor; specific for D-alanine. Lys-36 carries the post-translational modification N6-(pyridoxal phosphate)lysine. Arg-132 contacts substrate. The active-site Proton acceptor; specific for L-alanine is the Tyr-256. Position 304 (Met-304) interacts with substrate.

Belongs to the alanine racemase family. Requires pyridoxal 5'-phosphate as cofactor.

It carries out the reaction L-alanine = D-alanine. Its pathway is amino-acid biosynthesis; D-alanine biosynthesis; D-alanine from L-alanine: step 1/1. In terms of biological role, catalyzes the interconversion of L-alanine and D-alanine. May also act on other amino acids. The sequence is that of Alanine racemase (alr) from Pasteurella multocida (strain Pm70).